Consider the following 120-residue polypeptide: MFVLSGYEYLLGFFIICSLVPALALSASKLLRPSGYAPERRTTYESGMEPIGGAWIQFNIRYYMFALVFVVFDVETVFLYPWAVAFHRLGLLAFIEALVFIAILVVALVYAWRKGALEWS.

3 consecutive transmembrane segments (helical) span residues 1 to 21, 64 to 84, and 89 to 109; these read MFVL…SLVP, MFAL…PWAV, and LGLL…VALV.

Belongs to the complex I subunit 3 family. In terms of assembly, NDH-1 can be composed of about 15 different subunits; different subcomplexes with different compositions have been identified which probably have different functions.

The protein resides in the cellular thylakoid membrane. It carries out the reaction a plastoquinone + NADH + (n+1) H(+)(in) = a plastoquinol + NAD(+) + n H(+)(out). It catalyses the reaction a plastoquinone + NADPH + (n+1) H(+)(in) = a plastoquinol + NADP(+) + n H(+)(out). Its function is as follows. NDH-1 shuttles electrons from an unknown electron donor, via FMN and iron-sulfur (Fe-S) centers, to quinones in the respiratory and/or the photosynthetic chain. The immediate electron acceptor for the enzyme in this species is believed to be plastoquinone. Couples the redox reaction to proton translocation, and thus conserves the redox energy in a proton gradient. Cyanobacterial NDH-1 also plays a role in inorganic carbon-concentration. In Nostoc punctiforme (strain ATCC 29133 / PCC 73102), this protein is NAD(P)H-quinone oxidoreductase subunit 3.